The chain runs to 271 residues: Formamidopyrimidine-DNA glycosylase (271 aa).

Catalysis depends on Pro2, which acts as the Schiff-base intermediate with DNA. Catalysis depends on Glu3, which acts as the Proton donor. The Proton donor; for beta-elimination activity role is filled by Lys58. DNA contacts are provided by His91, Arg110, and Arg152. The FPG-type zinc finger occupies 237-271 (QIYGRSAHPCPICGTPIRLERIGQRASYYCTQCQH). Arg261 serves as the catalytic Proton donor; for delta-elimination activity.

The protein belongs to the FPG family. In terms of assembly, monomer. The cofactor is Zn(2+).

The enzyme catalyses Hydrolysis of DNA containing ring-opened 7-methylguanine residues, releasing 2,6-diamino-4-hydroxy-5-(N-methyl)formamidopyrimidine.. The catalysed reaction is 2'-deoxyribonucleotide-(2'-deoxyribose 5'-phosphate)-2'-deoxyribonucleotide-DNA = a 3'-end 2'-deoxyribonucleotide-(2,3-dehydro-2,3-deoxyribose 5'-phosphate)-DNA + a 5'-end 5'-phospho-2'-deoxyribonucleoside-DNA + H(+). Its function is as follows. Involved in base excision repair of DNA damaged by oxidation or by mutagenic agents. Acts as a DNA glycosylase that recognizes and removes damaged bases. Has a preference for oxidized purines, such as 7,8-dihydro-8-oxoguanine (8-oxoG). Has AP (apurinic/apyrimidinic) lyase activity and introduces nicks in the DNA strand. Cleaves the DNA backbone by beta-delta elimination to generate a single-strand break at the site of the removed base with both 3'- and 5'-phosphates. The protein is Formamidopyrimidine-DNA glycosylase of Nitrosococcus oceani (strain ATCC 19707 / BCRC 17464 / JCM 30415 / NCIMB 11848 / C-107).